Reading from the N-terminus, the 153-residue chain is MKCPFCNNINTQVKDSRAIEDDILIRRRRICLVCNSRFTTIEKLLLRSFMVIKKNGETEPFNKQKLLSSILIATKKRPVSHEGINVMVNNIFYELEGKKENAVPTDVIGKMVMDNLFKLDKVAYVRFASVYMNFKNINDFSNIIAKIINEQIL.

A zinc finger lies at C3–C34. Residues F49–D139 enclose the ATP-cone domain.

It belongs to the NrdR family. The cofactor is Zn(2+).

In terms of biological role, negatively regulates transcription of bacterial ribonucleotide reductase nrd genes and operons by binding to NrdR-boxes. The chain is Transcriptional repressor NrdR from Ehrlichia canis (strain Jake).